Consider the following 880-residue polypeptide: Probable LRR receptor-like serine/threonine-protein kinase At2g28960 (880 aa).

A signal peptide spans Met-1 to Ala-24. Over Gln-25–Pro-511 the chain is Extracellular. Asn-180, Asn-201, Asn-228, Asn-254, Asn-287, Asn-403, Asn-430, and Asn-441 each carry an N-linked (GlcNAc...) asparagine glycan. LRR repeat units follow at residues Arg-409–Asn-430, Glu-433–Met-455, and Ser-457–Leu-476. N-linked (GlcNAc...) asparagine glycosylation is present at Asn-505. Residues Val-512–Phe-532 traverse the membrane as a helical segment. Residues Lys-533 to Arg-880 are Cytoplasmic-facing. Thr-564 carries the phosphothreonine modification. Positions Asp-573–Leu-846 constitute a Protein kinase domain. ATP is bound by residues Leu-579–Val-587 and Lys-601. Tyr-646 carries the phosphotyrosine modification. The Proton acceptor role is filled by Asp-698. Ser-732 carries the post-translational modification Phosphoserine. Phosphothreonine is present on residues Thr-733 and Thr-738. The residue at position 746 (Tyr-746) is a Phosphotyrosine. Residues Gly-854–Arg-880 are disordered. Polar residues predominate over residues Ser-861 to Arg-880.

Belongs to the protein kinase superfamily. Ser/Thr protein kinase family.

It localises to the membrane. It carries out the reaction L-seryl-[protein] + ATP = O-phospho-L-seryl-[protein] + ADP + H(+). The catalysed reaction is L-threonyl-[protein] + ATP = O-phospho-L-threonyl-[protein] + ADP + H(+). This Arabidopsis thaliana (Mouse-ear cress) protein is Probable LRR receptor-like serine/threonine-protein kinase At2g28960.